We begin with the raw amino-acid sequence, 388 residues long: uncharacterized protein (388 aa).

11 consecutive transmembrane segments (helical) span residues alanine 18–valine 38, leucine 42–leucine 62, alanine 89–leucine 111, valine 116–leucine 136, valine 145–leucine 165, alanine 171–isoleucine 191, threonine 219–phenylalanine 239, glycine 248–phenylalanine 268, threonine 287–isoleucine 307, alanine 341–isoleucine 361, and glutamine 365–leucine 385.

It belongs to the major facilitator superfamily. YfcJ family.

Its subcellular location is the cell inner membrane. This is an uncharacterized protein from Salmonella typhimurium (strain LT2 / SGSC1412 / ATCC 700720).